A 1039-amino-acid chain; its full sequence is Antigen 43 (1039 aa).

A signal peptide spans 1-52 (MKRHLNTCYRLVWNHMTGAFVVASELARARGKRGGVAVALSLAAVTSLPVLA). The Autotransporter domain maps to 737-1039 (VNGENNSVRL…NGQATLNVTF (303 aa)).

In terms of assembly, interaction with TamA of the translocation and assembly module (TAM) initiates insertion in the outer membrane.

The protein localises to the periplasm. It is found in the secreted. The protein resides in the cell surface. It localises to the cell outer membrane. In terms of biological role, controls colony form variation and autoaggregation. May function as an adhesin. The polypeptide is Antigen 43 (flu) (Escherichia coli (strain K12)).